Reading from the N-terminus, the 327-residue chain is Fructose import binding protein FruE (327 aa).

Residues 1–22 form the signal peptide; that stretch reads MKNWKKAIALVASAAALVSVAA. A lipid anchor (N-palmitoyl cysteine) is attached at Cys-23. Residue Cys-23 is the site of S-diacylglycerol cysteine attachment.

Belongs to the bacterial solute-binding protein 2 family. As to quaternary structure, the complex is composed of an ATP-binding protein (FruK), two transmembrane proteins (FruF and FruG) and a solute-binding protein (FruE).

It localises to the cell membrane. In terms of biological role, part of the high-affinity ABC transporter complex FruEKFG involved in fructose uptake. Can also transport ribose and xylose, with lower affinity. Binds fructose, ribose and xylose, with fructose as the preferred substrate. This chain is Fructose import binding protein FruE, found in Bifidobacterium longum (strain NCC 2705).